The primary structure comprises 572 residues: Glypican-5 (572 aa).

The signal sequence occupies residues 1–24; it reads MDARTWRLGWRCLLLLALLGSTRS. Asn120 and Asn237 each carry an N-linked (GlcNAc...) asparagine glycan. Ser486 carries an O-linked (Xyl...) (glycosaminoglycan) serine glycan. Asn493 carries N-linked (GlcNAc...) asparagine glycosylation. O-linked (Xyl...) (glycosaminoglycan) serine glycans are attached at residues Ser495, Ser507, and Ser509. A glycan (N-linked (GlcNAc...) asparagine) is linked at Asn527.

This sequence belongs to the glypican family.

The protein resides in the cell membrane. Its subcellular location is the secreted. It localises to the extracellular space. Cell surface proteoglycan that bears heparan sulfate. The sequence is that of Glypican-5 (Gpc5) from Mus musculus (Mouse).